A 338-amino-acid chain; its full sequence is Ornithine carbamoyltransferase, catabolic (338 aa).

Carbamoyl phosphate is bound by residues 65 to 68 (STRT), Q92, R116, and 143 to 146 (HPTQ). Residues N175, D239, and 243 to 244 (SM) each bind L-ornithine. Carbamoyl phosphate-binding positions include 280 to 281 (CL) and R325.

This sequence belongs to the aspartate/ornithine carbamoyltransferase superfamily. OTCase family.

The protein resides in the cytoplasm. The enzyme catalyses carbamoyl phosphate + L-ornithine = L-citrulline + phosphate + H(+). It functions in the pathway amino-acid degradation; L-arginine degradation via ADI pathway; carbamoyl phosphate from L-arginine: step 2/2. Reversibly catalyzes the transfer of the carbamoyl group from carbamoyl phosphate (CP) to the N(epsilon) atom of ornithine (ORN) to produce L-citrulline. This chain is Ornithine carbamoyltransferase, catabolic, found in Treponema denticola (strain ATCC 35405 / DSM 14222 / CIP 103919 / JCM 8153 / KCTC 15104).